A 126-amino-acid chain; its full sequence is Glycine cleavage system H protein (126 aa).

In terms of domain architecture, Lipoyl-binding spans threonine 21–lysine 103. Position 62 is an N6-lipoyllysine (lysine 62).

It belongs to the GcvH family. In terms of assembly, the glycine cleavage system is composed of four proteins: P, T, L and H. Requires (R)-lipoate as cofactor.

In terms of biological role, the glycine cleavage system catalyzes the degradation of glycine. The H protein shuttles the methylamine group of glycine from the P protein to the T protein. This chain is Glycine cleavage system H protein, found in Vibrio parahaemolyticus serotype O3:K6 (strain RIMD 2210633).